The chain runs to 656 residues: uncharacterized protein (656 aa).

This is an uncharacterized protein from Rickettsia prowazekii (strain Madrid E).